We begin with the raw amino-acid sequence, 286 residues long: ATP synthase gamma chain (286 aa).

It belongs to the ATPase gamma chain family. F-type ATPases have 2 components, CF(1) - the catalytic core - and CF(0) - the membrane proton channel. CF(1) has five subunits: alpha(3), beta(3), gamma(1), delta(1), epsilon(1). CF(0) has three main subunits: a, b and c.

It is found in the cell inner membrane. In terms of biological role, produces ATP from ADP in the presence of a proton gradient across the membrane. The gamma chain is believed to be important in regulating ATPase activity and the flow of protons through the CF(0) complex. This Pseudomonas entomophila (strain L48) protein is ATP synthase gamma chain.